The chain runs to 85 residues: Probable oxaloacetate decarboxylase gamma chain (85 aa).

A helical transmembrane segment spans residues 11–33; that stretch reads AATLMVTGMAVVFIFLTILVYLV.

It belongs to the OadG family. As to quaternary structure, heterotrimer of an alpha, a beta and a gamma subunit. It depends on Na(+) as a cofactor.

It is found in the cell membrane. It carries out the reaction oxaloacetate + 2 Na(+)(in) + H(+) = pyruvate + 2 Na(+)(out) + CO2. Functionally, catalyzes the decarboxylation of oxaloacetate coupled to Na(+) translocation. The sequence is that of Probable oxaloacetate decarboxylase gamma chain from Vibrio parahaemolyticus serotype O3:K6 (strain RIMD 2210633).